Consider the following 231-residue polypeptide: MQHTVDIQAIESKLNFTFSHPRLLITALTHPSYRNEFPSAEEDSERLEFLGDAVLGLVVTEHLFLLFPALNEGLLSTTRAALVNAEACFEYTQKLSLGEHLLIGRGEKMQSHRGKISAYANLLEAILGAVYLDGGLSPARQIIVPLLPDKESILPLMLVNPKNRLQQFTQQTLKVLPSYKALPWKSEDGSPGYHVQVFVNGDLWGEGFAGSKKEAEKLAAKQALSTHDNKN.

Positions 7 to 135 constitute an RNase III domain; sequence IQAIESKLNF…ILGAVYLDGG (129 aa). A Mg(2+)-binding site is contributed by Glu48. Asp52 is an active-site residue. Residues Asn121 and Glu124 each contribute to the Mg(2+) site. Glu124 is an active-site residue. A DRBM domain is found at 160 to 229; it reads NPKNRLQQFT…AKQALSTHDN (70 aa).

The protein belongs to the ribonuclease III family. In terms of assembly, homodimer. Requires Mg(2+) as cofactor.

It is found in the cytoplasm. The catalysed reaction is Endonucleolytic cleavage to 5'-phosphomonoester.. Its function is as follows. Digests double-stranded RNA. Involved in the processing of primary rRNA transcript to yield the immediate precursors to the large and small rRNAs (23S and 16S). Processes some mRNAs, and tRNAs when they are encoded in the rRNA operon. Processes pre-crRNA and tracrRNA of type II CRISPR loci if present in the organism. The sequence is that of Ribonuclease 3 from Chlamydia trachomatis serovar A (strain ATCC VR-571B / DSM 19440 / HAR-13).